Here is a 92-residue protein sequence, read N- to C-terminus: MPKQSKMSNVAYEQLNQDADRILHLIKVQMDNLTLPSCPLYEEVLDTQMFGLQKEVDFAVKLGLVDKEDGKNLMLRLEKELSKLHEAFTNVK.

The protein belongs to the UPF0358 family.

This Staphylococcus haemolyticus (strain JCSC1435) protein is UPF0358 protein SH1840.